We begin with the raw amino-acid sequence, 126 residues long: Fluoride-specific ion channel FluC (126 aa).

4 consecutive transmembrane segments (helical) span residues 4–24 (YLYIAAGGAAGSLCRYLVSGV), 35–55 (IGTFSVNMIGCLFFGLVTGLF), 67–87 (LLILTGFMGAFTTFSTYMFES), and 100–120 (ALNIGGQSILGFACIVGGLAL). Na(+)-binding residues include G75 and T78.

This sequence belongs to the fluoride channel Fluc/FEX (TC 1.A.43) family.

It localises to the cell inner membrane. It catalyses the reaction fluoride(in) = fluoride(out). Its activity is regulated as follows. Na(+) is not transported, but it plays an essential structural role and its presence is essential for fluoride channel function. Functionally, fluoride-specific ion channel. Important for reducing fluoride concentration in the cell, thus reducing its toxicity. In Maridesulfovibrio salexigens (strain ATCC 14822 / DSM 2638 / NCIMB 8403 / VKM B-1763) (Desulfovibrio salexigens), this protein is Fluoride-specific ion channel FluC.